Here is a 260-residue protein sequence, read N- to C-terminus: Dynein regulatory complex subunit 6 (260 aa).

Positions 1–13 (MAPKKKGGGKKKK) are enriched in basic residues. The tract at residues 1–43 (MAPKKKGGGKKKKKDDGAEPPHDGSWERAVESGTWEKPVTDLP) is disordered. Positions 14–30 (KDDGAEPPHDGSWERAV) are enriched in basic and acidic residues.

It belongs to the DRC6 family. Component of the nexin-dynein regulatory complex (N-DRC).

It localises to the cytoplasm. Its subcellular location is the cytoskeleton. It is found in the flagellum axoneme. Functionally, component of the nexin-dynein regulatory complex (N-DRC), a key regulator of ciliary/flagellar motility which maintains the alignment and integrity of the distal axoneme and regulates microtubule sliding in motile axonemes. The polypeptide is Dynein regulatory complex subunit 6 (Chlamydomonas reinhardtii (Chlamydomonas smithii)).